Reading from the N-terminus, the 172-residue chain is B-box zinc finger protein 18 (172 aa).

Zn(2+) contacts are provided by cysteine 5, cysteine 8, cysteine 28, histidine 33, cysteine 56, cysteine 59, cysteine 79, and histidine 84. A B box-type 1; atypical zinc finger spans residues cysteine 5–leucine 47. The segment at cysteine 56–leucine 96 adopts a B box-type 2; atypical zinc-finger fold. The segment at glutamine 119–glutamate 172 is disordered. The segment covering lysine 120 to asparagine 132 has biased composition (polar residues). Over residues arginine 148 to glutamate 158 the composition is skewed to basic and acidic residues.

In terms of tissue distribution, expressed in vasculature of leaves and petioles.

Its subcellular location is the nucleus. Acts as a negative regulator of seedling photomorphogenesis. Acts as a negative regulator of blue light-mediated inhibition of hypocotyl elongation through increase of bioactive gibberellin levels. Acts as a repressor of thermotolerance by modulating expression of a set of heat shock-responsive genes. This chain is B-box zinc finger protein 18, found in Arabidopsis thaliana (Mouse-ear cress).